Consider the following 244-residue polypeptide: tRNA (guanine-N(1)-)-methyltransferase (244 aa).

S-adenosyl-L-methionine-binding positions include Gly110 and 129–134 (IGDYIL).

The protein belongs to the RNA methyltransferase TrmD family. Homodimer.

It localises to the cytoplasm. The enzyme catalyses guanosine(37) in tRNA + S-adenosyl-L-methionine = N(1)-methylguanosine(37) in tRNA + S-adenosyl-L-homocysteine + H(+). In terms of biological role, specifically methylates guanosine-37 in various tRNAs. In Syntrophomonas wolfei subsp. wolfei (strain DSM 2245B / Goettingen), this protein is tRNA (guanine-N(1)-)-methyltransferase.